Consider the following 200-residue polypeptide: Putative vacuolar protein sorting-associated protein 24 homolog 2 (200 aa).

Positions threonine 2–aspartate 23 form a coiled coil.

The protein belongs to the SNF7 family. As to quaternary structure, component of the endosomal sorting required for transport complex III (ESCRT-III), composed at least of VPS2, VPS20, VPS24 and VPS32.

Its subcellular location is the endosome. Functionally, component of the ESCRT-III complex, which is required for multivesicular bodies (MVBs) formation and sorting of endosomal cargo proteins into MVBs. The ESCRT-III complex is probably involved in the concentration of MVB cargo. This Arabidopsis thaliana (Mouse-ear cress) protein is Putative vacuolar protein sorting-associated protein 24 homolog 2 (VPS24-2).